Here is a 394-residue protein sequence, read N- to C-terminus: Phosphoglycerate kinase (394 aa).

Substrate is bound by residues 21 to 23, Arg36, 59 to 62, Arg118, and Arg151; these read DFN and HLGR. Ser183 is subject to Phosphoserine. Positions 201 and 292 each coordinate ATP. The residue at position 299 (Thr299) is a Phosphothreonine. Residues Glu323 and 350–353 contribute to the ATP site; that span reads GGDS.

This sequence belongs to the phosphoglycerate kinase family. Monomer.

The protein resides in the cytoplasm. The catalysed reaction is (2R)-3-phosphoglycerate + ATP = (2R)-3-phospho-glyceroyl phosphate + ADP. The protein operates within carbohydrate degradation; glycolysis; pyruvate from D-glyceraldehyde 3-phosphate: step 2/5. The protein is Phosphoglycerate kinase of Bacillus thuringiensis subsp. konkukian (strain 97-27).